Reading from the N-terminus, the 300-residue chain is DNA repair protein PprA (300 aa).

T88 carries the phosphothreonine modification. Residue S128 is modified to Phosphoserine. A Phosphothreonine modification is found at T160.

Phosphorylated by RqkA in vitro. Phosphorylated primarily at Thr-88, and to a little extent at Ser-128 and Thr-160.

With respect to regulation, phosphorylation increases DNA binding affinity. DsDNA-binding protein that contributes to the ionizing radiation resistance of D.radiodurans. Plays a role in DNA repair and genome reconstitution, and is necessary for recovery from severe genomic fragmentation as a result of exposure to severe levels of ionizing radiation. In vitro, binds to double-stranded DNA carrying strand breaks and stimulates the DNA end-joining reaction catalyzed by DNA ligases. Thus, PprA plays a critical role in a non-homologous end-joining (NHEJ) pathway for the repair of radiation-induced DNA double-strands breaks. Cannot bind to dsDNA without strand breaks or single-stranded DNA. This Deinococcus radiodurans (strain ATCC 13939 / DSM 20539 / JCM 16871 / CCUG 27074 / LMG 4051 / NBRC 15346 / NCIMB 9279 / VKM B-1422 / R1) protein is DNA repair protein PprA (pprA).